Consider the following 277-residue polypeptide: NAD kinase (277 aa).

Residue Asp-67 is the Proton acceptor of the active site. NAD(+) is bound by residues 67–68, Arg-72, 137–138, Lys-148, Arg-165, Asp-167, 178–183, Leu-202, and Gln-236; these read DG, NE, and TGYAMS.

It belongs to the NAD kinase family. It depends on a divalent metal cation as a cofactor.

The protein localises to the cytoplasm. It catalyses the reaction NAD(+) + ATP = ADP + NADP(+) + H(+). Involved in the regulation of the intracellular balance of NAD and NADP, and is a key enzyme in the biosynthesis of NADP. Catalyzes specifically the phosphorylation on 2'-hydroxyl of the adenosine moiety of NAD to yield NADP. The sequence is that of NAD kinase from Pyrococcus abyssi (strain GE5 / Orsay).